The primary structure comprises 450 residues: Grayanic acid biosynthesis cluster O-methyltransferase (450 aa).

Residue Asp254 coordinates S-adenosyl-L-methionine. The active-site Proton acceptor is His301.

Belongs to the class I-like SAM-binding methyltransferase superfamily. Cation-independent O-methyltransferase family. COMT subfamily.

It participates in secondary metabolite biosynthesis. Functionally, non-reducing polyketide synthase; part of the gene cluster that mediates the biosynthesis of orcinol depsidone grayanic acid (GRA), the only major secondary metabolite known in C.grayi. The first step consists in the ring and depside synthesis by PKS16 leading to 4-O-demethylsphaerophorin, involving different orcinol-like rings, one with acetyl CoA and the other with octanoyl CoA as the starter. Further depsidone formation by the GRA cluster-specific cytochrome P450 leads to 4-O-demethylgrayanic acid. Finally, the cluster specific O-methyltransferase probably converts the 4-O-demethylgrayanic acid into grayanic acid. This is Grayanic acid biosynthesis cluster O-methyltransferase from Cladonia grayi (Gray's cup lichen).